The following is a 201-amino-acid chain: Small ribosomal subunit protein uS4 (201 aa).

One can recognise an S4 RNA-binding domain in the interval 91 to 151 (SRLDNVVYRA…DKSINTLPFE (61 aa)).

The protein belongs to the universal ribosomal protein uS4 family. Part of the 30S ribosomal subunit. Contacts protein S5. The interaction surface between S4 and S5 is involved in control of translational fidelity.

In terms of biological role, one of the primary rRNA binding proteins, it binds directly to 16S rRNA where it nucleates assembly of the body of the 30S subunit. With S5 and S12 plays an important role in translational accuracy. The protein is Small ribosomal subunit protein uS4 of Mycolicibacterium gilvum (strain PYR-GCK) (Mycobacterium gilvum (strain PYR-GCK)).